A 100-amino-acid chain; its full sequence is A-type ATP synthase subunit F (100 aa).

It belongs to the V-ATPase F subunit family. Has multiple subunits with at least A(3), B(3), C, D, E, F, H, I and proteolipid K(x).

The protein localises to the cell membrane. Its function is as follows. Component of the A-type ATP synthase that produces ATP from ADP in the presence of a proton gradient across the membrane. This chain is A-type ATP synthase subunit F, found in Methanoregula boonei (strain DSM 21154 / JCM 14090 / 6A8).